A 541-amino-acid polypeptide reads, in one-letter code: Calcium-dependent protein kinase 25 (541 aa).

Over residues 1–11 (MGQCCTGGGKA) the composition is skewed to gly residues. A disordered region spans residues 1–74 (MGQCCTGGGK…AGPIGEVLER (74 aa)). Gly2 carries the N-myristoyl glycine lipid modification. Low complexity predominate over residues 38–67 (AKQQPCSPAAKAAATEAAAAASSSKKPAGP). Positions 83-341 (YSIGKELGRG…AFQVLNHPWI (259 aa)) constitute a Protein kinase domain. Residues 89–97 (LGRGQFGVT) and Lys112 contribute to the ATP site. The active-site Proton acceptor is the Asp207. The segment at 347-377 (APDVPLDNVVLNRLKQFRAMNQFKKAALRII) is autoinhibitory domain. EF-hand domains are found at residues 384–419 (EEIK…QGTK), 420–455 (FSDN…MNKM), 456–491 (DREE…QGLY), and 493–526 (ANEI…GSGC). 19 residues coordinate Ca(2+): Asp397, Asp399, Ser401, Thr403, Glu408, Asp433, Asp435, Asn437, Glu444, Asp469, Asp471, Ser473, Tyr475, Glu480, Asp504, Asn506, Asp508, Arg510, and Glu515.

It belongs to the protein kinase superfamily. Ser/Thr protein kinase family. CDPK subfamily. Specifically expressed in heading panicles, spikelets and mature pollen grains. Not expressed in vegetative tissues.

The protein resides in the membrane. The enzyme catalyses L-seryl-[protein] + ATP = O-phospho-L-seryl-[protein] + ADP + H(+). The catalysed reaction is L-threonyl-[protein] + ATP = O-phospho-L-threonyl-[protein] + ADP + H(+). With respect to regulation, activated by calcium. Autophosphorylation may play an important role in the regulation of the kinase activity. Its function is as follows. May play a role in signal transduction pathways that involve calcium as a second messenger. In Oryza sativa subsp. japonica (Rice), this protein is Calcium-dependent protein kinase 25.